We begin with the raw amino-acid sequence, 598 residues long: Elongation factor 4 (598 aa).

In terms of domain architecture, tr-type G spans 4–186; sequence DHIRNFSIIA…AIVKRVPPPK (183 aa). GTP contacts are provided by residues 16–21 and 133–136; these read DHGKST and NKID.

It belongs to the TRAFAC class translation factor GTPase superfamily. Classic translation factor GTPase family. LepA subfamily.

It is found in the cell inner membrane. It carries out the reaction GTP + H2O = GDP + phosphate + H(+). In terms of biological role, required for accurate and efficient protein synthesis under certain stress conditions. May act as a fidelity factor of the translation reaction, by catalyzing a one-codon backward translocation of tRNAs on improperly translocated ribosomes. Back-translocation proceeds from a post-translocation (POST) complex to a pre-translocation (PRE) complex, thus giving elongation factor G a second chance to translocate the tRNAs correctly. Binds to ribosomes in a GTP-dependent manner. The chain is Elongation factor 4 from Magnetococcus marinus (strain ATCC BAA-1437 / JCM 17883 / MC-1).